We begin with the raw amino-acid sequence, 177 residues long: ATP synthase subunit delta (177 aa).

This sequence belongs to the ATPase delta chain family. F-type ATPases have 2 components, F(1) - the catalytic core - and F(0) - the membrane proton channel. F(1) has five subunits: alpha(3), beta(3), gamma(1), delta(1), epsilon(1). F(0) has three main subunits: a(1), b(2) and c(10-14). The alpha and beta chains form an alternating ring which encloses part of the gamma chain. F(1) is attached to F(0) by a central stalk formed by the gamma and epsilon chains, while a peripheral stalk is formed by the delta and b chains.

The protein localises to the cell inner membrane. Functionally, f(1)F(0) ATP synthase produces ATP from ADP in the presence of a proton or sodium gradient. F-type ATPases consist of two structural domains, F(1) containing the extramembraneous catalytic core and F(0) containing the membrane proton channel, linked together by a central stalk and a peripheral stalk. During catalysis, ATP synthesis in the catalytic domain of F(1) is coupled via a rotary mechanism of the central stalk subunits to proton translocation. In terms of biological role, this protein is part of the stalk that links CF(0) to CF(1). It either transmits conformational changes from CF(0) to CF(1) or is implicated in proton conduction. This Flavobacterium psychrophilum (strain ATCC 49511 / DSM 21280 / CIP 103535 / JIP02/86) protein is ATP synthase subunit delta.